We begin with the raw amino-acid sequence, 331 residues long: MNMIDPFGRTISYLRVSVTDRCDFRCTYCMAEDMAFLPKKDLLSLEELDRLCSVFIEKGVRRLRLTGGEPLVRKNIMHLVRQLSRHLDSGALEELTLTTNGSQLSRFAAELADCGVKRINVSLDTLDADKFHQITRWGHLDKVMQGIDAAQAAGLKVKLNAVALKDFNDAELPDMMRWAHGRGMDLTVIETMPMGEIDADRTDQYLPLSLLRASLERQFTLTDIPFKTGGPARYVHVAETGGKLGFITPMTHNFCESCNRVRLTCTGTLYMCLGQEDAADLRAPLRASEGNELVADAIDEAIGRKPKGHDFIIDRRTSRPSVSRHMSVTGG.

The Radical SAM core domain occupies 6–231 (PFGRTISYLR…TDIPFKTGGP (226 aa)). Arg-15 serves as a coordination point for GTP. Cys-22 and Cys-26 together coordinate [4Fe-4S] cluster. Residue Tyr-28 coordinates S-adenosyl-L-methionine. Cys-29 is a [4Fe-4S] cluster binding site. Arg-64 lines the GTP pocket. S-adenosyl-L-methionine is bound at residue Gly-68. Thr-98 is a binding site for GTP. Ser-122 serves as a coordination point for S-adenosyl-L-methionine. Lys-158 is a GTP binding site. Met-192 contributes to the S-adenosyl-L-methionine binding site. The [4Fe-4S] cluster site is built by Cys-255 and Cys-258. A GTP-binding site is contributed by 260 to 262 (RVR). A [4Fe-4S] cluster-binding site is contributed by Cys-272.

Belongs to the radical SAM superfamily. MoaA family. In terms of assembly, monomer and homodimer. Requires [4Fe-4S] cluster as cofactor.

It catalyses the reaction GTP + AH2 + S-adenosyl-L-methionine = (8S)-3',8-cyclo-7,8-dihydroguanosine 5'-triphosphate + 5'-deoxyadenosine + L-methionine + A + H(+). It participates in cofactor biosynthesis; molybdopterin biosynthesis. Its function is as follows. Catalyzes the cyclization of GTP to (8S)-3',8-cyclo-7,8-dihydroguanosine 5'-triphosphate. This is GTP 3',8-cyclase from Mesorhizobium japonicum (strain LMG 29417 / CECT 9101 / MAFF 303099) (Mesorhizobium loti (strain MAFF 303099)).